The following is a 489-amino-acid chain: Cytochrome P450 monooxygenase prhB (489 aa).

Transmembrane regions (helical) follow at residues 1-21, 212-232, and 287-307; these read MFSF…KVIY, VIFQ…MIFA, and LFIG…AYLL. Residues asparagine 347 and asparagine 379 are each glycosylated (N-linked (GlcNAc...) asparagine). Cysteine 431 is a binding site for heme.

Belongs to the cytochrome P450 family. It depends on heme as a cofactor.

It localises to the membrane. It participates in secondary metabolite biosynthesis; terpenoid biosynthesis. Cytochrome P450 monooxygenase; part of the gene cluster that mediates the biosynthesis of paraherquonin, a meroterpenoid with a unique, highly congested hexacyclic molecular architecture. The first step of the pathway is the synthesis of 3,5-dimethylorsellinic acid (DMOA) by the polyketide synthase prhL. Synthesis of DMOA is followed by farnesylation by the prenyltransferase prhE, methylesterification by the methyl-transferase prhM, epoxidation of the prenyl chain by the flavin-dependent monooxygenase prhF, and cyclization of the farnesyl moiety by the terpene cyclase prhH, to yield the tetracyclic intermediate, protoaustinoid A. The short chain dehydrogenase prhI then oxidizes the C-3 alcohol group of the terpene cyclase product to transform protoaustinoid A into protoaustinoid B. The FAD-binding monooxygenase prhJ catalyzes the oxidation of protoaustinoid B into preaustinoid A which is further oxidized into preaustinoid A1 by FAD-binding monooxygenase phrK. Finally, prhA leads to berkeleydione via the berkeleyone B intermediate. PrhA is a multifunctional dioxygenase that first desaturates at C5-C6 to form berkeleyone B, followed by rearrangement of the A/B-ring to form the cycloheptadiene moiety in berkeleydione. Berkeleydione serves as the key intermediate for the biosynthesis of paraherquonin as well as many other meroterpenoids. The cytochrome P450 monooxygenases prhB, prhD, and prhN, as well as the isomerase prhC, are probably involved in the late stage of paraherquonin biosynthesis, after the production of berkeleydione. Especially prhC might be a multifunctional enzyme that catalyzes the D-ring expansion via intramolecular methoxy rearrangement, as well as the hydrolysis of the expanded D-ring. This chain is Cytochrome P450 monooxygenase prhB, found in Penicillium brasilianum.